Here is a 676-residue protein sequence, read N- to C-terminus: GRB2-associated-binding protein 2 (676 aa).

Ser-2 is modified (phosphoserine). A PH domain is found at 6–117 (DVVCTGWLRK…WVQSICQICG (112 aa)). The interval 127–178 (SLRNVSSAGHGPRSSPAELSSSSQHLLRERKSSAPSHSSQPTLFTFEPPVSN) is disordered. Residues Ser-133, Ser-140, Ser-141, Ser-148, Ser-149, Ser-159, Ser-164, Ser-210, Ser-218, Ser-223, and Ser-264 each carry the phosphoserine modification. Residues 140 to 149 (SSPAELSSSS) are compositionally biased toward low complexity. Positions 159 to 169 (SAPSHSSQPTL) are enriched in polar residues. The residue at position 265 (Thr-265) is a Phosphothreonine. Position 266 is a phosphotyrosine (Tyr-266). At Thr-278 the chain carries Phosphothreonine. Ser-281 and Ser-285 each carry phosphoserine. Position 287 is a phosphothreonine (Thr-287). Tyr-293 carries the phosphotyrosine modification. At Thr-331 the chain carries Phosphothreonine. A disordered region spans residues 341 to 430 (VATPGDSAIA…RSAESMSDGV (90 aa)). Positions 351–358 (PPPRPPKP) match the SH3-binding motif. Ser-368 carries the phosphoserine modification. Phosphothreonine occurs at positions 385 and 391. A Phosphoserine modification is found at Ser-405. Thr-408 carries the phosphothreonine modification. Ser-422 and Ser-425 each carry phosphoserine. At Tyr-452 the chain carries Phosphotyrosine. The residue at position 480 (Ser-480) is a Phosphoserine. The segment at 492-531 (PSTTLPVHRGPSRGSEIQPPPVNRNLKPDRKAKPTPLDLR) is disordered. Residues 510–519 (PPPVNRNLKP) carry the SH3-binding motif. Ser-543 is subject to Phosphoserine. 2 stretches are compositionally biased toward polar residues: residues 556-577 (FNSS…STDS) and 589-611 (NPVS…STGS). Disordered regions lie at residues 556-643 (FNSS…KVDY) and 656-676 (NTMQ…GAKL). A phosphoserine mark is found at Ser-622 and Ser-623. Tyr-643 bears the Phosphotyrosine mark. Polar residues predominate over residues 656–670 (NTMQEWTDVRQSSEP).

The protein belongs to the GAB family. As to quaternary structure, part of a complex composed of EEIG1, TNFRSF11A/RANK, PLCG2, GAB2, TEC and BTK; complex formation increases in the presence of TNFSF11/RANKL. Interacts with SHC1; may mediate interaction with receptors. Interacts with SYK. Interacts with PI-3 kinase. Interacts with GRB2 (via SH3 2 domain). Interacts (phosphorylated) with PTPN11. Interacts with TNFRSF11A (via cytoplasmic domain). Interacts (phosphorylated) with 14-3-3 family proteins SFN, YWHAB, YWHAE, YWHAG, YWHAH, YWHAQ and YWHAZ; prevents interaction with GRB2 and attenuates GAB2 signaling. Interacts with HCK. In terms of processing, phosphorylated on tyrosine residue(s) by the thrombopoietin receptor (TPOR), stem cell factor receptor (SCFR), and T-cell and B-cell antigen receptors, gp130, IL-2R and IL-3R. Phosphorylated upon stimulation of TNFRSF11A/RANK by TNFSF11/RANKL. Phosphorylated upon EGF stimulation. Phosphorylated on tyrosine residues by HCK upon IL6 signaling. Post-translationally, dephosphorylated by PTPN11.

The protein resides in the cytoplasm. It is found in the cell membrane. It localises to the membrane raft. Its function is as follows. Adapter protein which acts downstream of several membrane receptors including cytokine, antigen, hormone, cell matrix and growth factor receptors to regulate multiple signaling pathways. Regulates osteoclast differentiation mediating the TNFRSF11A/RANK signaling. In allergic response, it plays a role in mast cells activation and degranulation through PI-3-kinase regulation. Also involved in the regulation of cell proliferation and hematopoiesis. This Homo sapiens (Human) protein is GRB2-associated-binding protein 2 (GAB2).